The primary structure comprises 202 residues: Na(+)-translocating NADH-quinone reductase subunit E (202 aa).

6 consecutive transmembrane segments (helical) span residues 11–31 (SIFM…FLAV), 41–61 (LGVA…IIYF), 81–101 (FLGF…LEMV), 114–134 (GIYL…LFMV), 144–164 (LVYG…LAGI), and 180–200 (LGIT…FSGI).

The protein belongs to the NqrDE/RnfAE family. In terms of assembly, composed of six subunits; NqrA, NqrB, NqrC, NqrD, NqrE and NqrF.

Its subcellular location is the cell inner membrane. It catalyses the reaction a ubiquinone + n Na(+)(in) + NADH + H(+) = a ubiquinol + n Na(+)(out) + NAD(+). In terms of biological role, NQR complex catalyzes the reduction of ubiquinone-1 to ubiquinol by two successive reactions, coupled with the transport of Na(+) ions from the cytoplasm to the periplasm. NqrA to NqrE are probably involved in the second step, the conversion of ubisemiquinone to ubiquinol. The polypeptide is Na(+)-translocating NADH-quinone reductase subunit E (Psychromonas ingrahamii (strain DSM 17664 / CCUG 51855 / 37)).